The sequence spans 507 residues: Bifunctional purine biosynthesis protein PurH (507 aa).

The MGS-like domain occupies 1–149 (MSESKRIKTA…KNYNDVIIVA (149 aa)).

The protein belongs to the PurH family.

The enzyme catalyses (6R)-10-formyltetrahydrofolate + 5-amino-1-(5-phospho-beta-D-ribosyl)imidazole-4-carboxamide = 5-formamido-1-(5-phospho-D-ribosyl)imidazole-4-carboxamide + (6S)-5,6,7,8-tetrahydrofolate. It carries out the reaction IMP + H2O = 5-formamido-1-(5-phospho-D-ribosyl)imidazole-4-carboxamide. It participates in purine metabolism; IMP biosynthesis via de novo pathway; 5-formamido-1-(5-phospho-D-ribosyl)imidazole-4-carboxamide from 5-amino-1-(5-phospho-D-ribosyl)imidazole-4-carboxamide (10-formyl THF route): step 1/1. It functions in the pathway purine metabolism; IMP biosynthesis via de novo pathway; IMP from 5-formamido-1-(5-phospho-D-ribosyl)imidazole-4-carboxamide: step 1/1. This chain is Bifunctional purine biosynthesis protein PurH, found in Bacteroides thetaiotaomicron (strain ATCC 29148 / DSM 2079 / JCM 5827 / CCUG 10774 / NCTC 10582 / VPI-5482 / E50).